The sequence spans 507 residues: ATP synthase subunit alpha, chloroplastic (507 aa).

169-176 is a binding site for ATP; that stretch reads IGDRQTGK.

Belongs to the ATPase alpha/beta chains family. In terms of assembly, F-type ATPases have 2 components, CF(1) - the catalytic core - and CF(0) - the membrane proton channel. CF(1) has five subunits: alpha(3), beta(3), gamma(1), delta(1), epsilon(1). CF(0) has four main subunits: a, b, b' and c.

It localises to the plastid. Its subcellular location is the chloroplast thylakoid membrane. It catalyses the reaction ATP + H2O + 4 H(+)(in) = ADP + phosphate + 5 H(+)(out). In terms of biological role, produces ATP from ADP in the presence of a proton gradient across the membrane. The alpha chain is a regulatory subunit. This Saccharum hybrid (Sugarcane) protein is ATP synthase subunit alpha, chloroplastic.